The following is a 514-amino-acid chain: F-box-like/WD repeat-containing protein TBL1XR1 (514 aa).

An N-acetylserine modification is found at Ser-2. One can recognise a LisH domain in the interval 4 to 36 (SSDEVNFLVYRYLQESGFSHSAFTFGIESHISQ). The F-box-like domain occupies 41-86 (GALVPPAALISIIQKGLQYVEAEVSINEDGTLFDGRPIESLSLIDA). At Lys-102 the chain carries N6-acetyllysine. The residue at position 119 (Ser-119) is a Phosphoserine. Residues 120–135 (QQGSAKNGENTANGEE) are compositionally biased toward low complexity. The interval 120 to 139 (QQGSAKNGENTANGEENGAH) is disordered. 8 WD repeats span residues 167-206 (GHES…TSGS), 223-262 (PSNK…ASTL), 264-303 (QHKG…AKQQ), 306-344 (FHSA…PIKT), 347-386 (GHTN…CVHD), 389-437 (AHNK…CIHT), 440-479 (KHQE…LVHS), and 481-513 (RGTG…LDLR). Residue Lys-277 forms a Glycyl lysine isopeptide (Lys-Gly) (interchain with G-Cter in SUMO2) linkage.

It belongs to the WD repeat EBI family. Component of the N-Cor repressor complex, at least composed of NCOR1, NCOR2, HDAC3, TBL1X, TBL1XR1, CORO2A and GPS2. Probable component of some E3 ubiquitin ligase complex. Interacts with histones H2B and H4. Interacts with MECP2; bridges interaction between MECP2 and NCOR1. Interacts with USP44. As to expression, widely expressed including the pituitary, hypothalamus, white and brown adipose tissue, muscle and liver.

The protein resides in the nucleus. In terms of biological role, F-box-like protein involved in the recruitment of the ubiquitin/19S proteasome complex to nuclear receptor-regulated transcription units. Plays an essential role in transcription activation mediated by nuclear receptors. Probably acts as integral component of the N-Cor corepressor complex that mediates the recruitment of the 19S proteasome complex, leading to the subsequent proteasomal degradation of N-Cor complex, thereby allowing cofactor exchange, and transcription activation. The protein is F-box-like/WD repeat-containing protein TBL1XR1 (TBL1XR1) of Homo sapiens (Human).